A 745-amino-acid chain; its full sequence is Serine/threonine-protein kinase BUR1 (745 aa).

The interval methionine 1–proline 21 is disordered. In terms of domain architecture, Protein kinase spans tyrosine 44–phenylalanine 349. Residues leucine 50 to valine 58 and lysine 73 contribute to the ATP site. Catalysis depends on aspartate 179, which acts as the Proton acceptor. Composition is skewed to basic and acidic residues over residues aspartate 380–alanine 406, aspartate 428–asparagine 475, and lysine 493–aspartate 508. Positions aspartate 380–aspartate 701 are disordered. Positions serine 516–lysine 534 are enriched in low complexity. The span at alanine 547–glutamine 557 shows a compositional bias: basic and acidic residues. Polar residues-rich tracts occupy residues valine 558–aspartate 567 and leucine 586–asparagine 598. A compositionally biased stretch (basic and acidic residues) spans lysine 599–valine 631. Low complexity predominate over residues lysine 632–serine 660. Over residues asparagine 661–threonine 674 the composition is skewed to polar residues. The span at glutamate 692–aspartate 701 shows a compositional bias: acidic residues.

This sequence belongs to the protein kinase superfamily. CMGC Ser/Thr protein kinase family. CDC2/CDKX subfamily.

Its subcellular location is the nucleus. The enzyme catalyses L-seryl-[protein] + ATP = O-phospho-L-seryl-[protein] + ADP + H(+). It catalyses the reaction L-threonyl-[protein] + ATP = O-phospho-L-threonyl-[protein] + ADP + H(+). The catalysed reaction is [DNA-directed RNA polymerase] + ATP = phospho-[DNA-directed RNA polymerase] + ADP + H(+). Its function is as follows. Serine/threonine-protein kinase involved in transcription regulation. Phosphorylates the UBC2/RAD6 ubiquitin-conjugating enzyme (E2), leading to monoubiquitination of histone H2B and the silencing of telomeric-associated genes. Also required for histone H3 methylation. Necessary for the recovery from pheromone-induced growth arrest in the cell cycle G1 phase. Required for pseudohyphal growth and virulence in mice. This Candida albicans (strain SC5314 / ATCC MYA-2876) (Yeast) protein is Serine/threonine-protein kinase BUR1 (CRK1).